Consider the following 538-residue polypeptide: Putative outer membrane porin BglH (538 aa).

Residues 1-25 form the signal peptide; the sequence is MFRRNIITSAILLMAPLAFSAQSLA.

This sequence belongs to the porin LamB (TC 1.B.3) family.

Its subcellular location is the cell outer membrane. In terms of biological role, may be a sugar porin with a broad carbohydrate specificity. This Escherichia coli O6:K15:H31 (strain 536 / UPEC) protein is Putative outer membrane porin BglH (bglH).